Consider the following 360-residue polypeptide: DNA replication and repair protein RecF (360 aa).

30-37 (GANGSGKT) lines the ATP pocket.

The protein belongs to the RecF family.

The protein resides in the cytoplasm. Its function is as follows. The RecF protein is involved in DNA metabolism; it is required for DNA replication and normal SOS inducibility. RecF binds preferentially to single-stranded, linear DNA. It also seems to bind ATP. In Acinetobacter baumannii (strain AB307-0294), this protein is DNA replication and repair protein RecF.